Reading from the N-terminus, the 728-residue chain is Catalase-peroxidase 1 (728 aa).

The tryptophyl-tyrosyl-methioninium (Trp-Tyr) (with M-244) cross-link spans Trp91 to Tyr218. Catalysis depends on His92, which acts as the Proton acceptor. The tryptophyl-tyrosyl-methioninium (Tyr-Met) (with W-91) cross-link spans Tyr218–Met244. Position 259 (His259) interacts with heme b.

It belongs to the peroxidase family. Peroxidase/catalase subfamily. Homodimer or homotetramer. The cofactor is heme b. In terms of processing, formation of the three residue Trp-Tyr-Met cross-link is important for the catalase, but not the peroxidase activity of the enzyme.

The catalysed reaction is H2O2 + AH2 = A + 2 H2O. The enzyme catalyses 2 H2O2 = O2 + 2 H2O. Its function is as follows. Bifunctional enzyme with both catalase and broad-spectrum peroxidase activity. This chain is Catalase-peroxidase 1, found in Burkholderia cenocepacia (strain HI2424).